An 814-amino-acid polypeptide reads, in one-letter code: Kexin (814 aa).

Residues 1–19 (MKVRKYITLCFWWAFSTSA) form the signal peptide. Residues 20–109 (LVSSQQIPLK…LFPRNDLFKR (90 aa)) constitute a propeptide that is removed on maturation. Asn42 carries N-linked (GlcNAc...) asparagine glycosylation. Positions 110 to 113 (LPVP) are cleaved as a propeptide — removed by dipeptidylpeptidase STE13. Residues 114 to 678 (APPMDSSLLP…KLSSPRQAMH (565 aa)) are Lumenal-facing. Asp135 serves as a coordination point for Ca(2+). Residues 141-453 (QWHLVNPSFP…FGKIDAHKLI (313 aa)) enclose the Peptidase S8 domain. Asn163 is a glycosylation site (N-linked (GlcNAc...) asparagine). The Charge relay system role is filled by Asp175. Asp184 contributes to the Ca(2+) binding site. His213 acts as the Charge relay system in catalysis. Ca(2+) contacts are provided by Asn227, Asp277, Asp320, and Glu350. Cystine bridges form between Cys230–Cys377 and Cys322–Cys352. Ser385 (charge relay system) is an active-site residue. N-linked (GlcNAc...) asparagine glycans are attached at residues Asn404 and Asn480. Residues 462–596 (VNAQTWFYLP…RLKLFGESID (135 aa)) form the P/Homo B domain. The segment at 651–671 (PQTTTASTDPDSDPNTPKKLS) is disordered. Positions 653–667 (TTTASTDPDSDPNTP) are enriched in low complexity. The helical transmembrane segment at 679–699 (YFLTIFLIGATFLVLYFMFFM) threads the bilayer. At 700–814 (KSRRRIRRSR…PDVPPSSGRS (115 aa)) the chain is on the cytoplasmic side. The disordered stretch occupies residues 756–814 (SLSSSENGDAEHTIDSVLTNENPFSDPIKQKFPNDANAESASNKLQELQPDVPPSSGRS). The segment covering 792-801 (NAESASNKLQ) has biased composition (polar residues).

This sequence belongs to the peptidase S8 family. Furin subfamily. The cofactor is Ca(2+). In terms of processing, O-glycosylated.

Its subcellular location is the golgi apparatus. The protein localises to the trans-Golgi network membrane. The enzyme catalyses Cleavage of -Lys-Arg-|-Xaa- and -Arg-Arg-|-Xaa- bonds to process yeast alpha-factor pheromone and killer toxin precursors.. In terms of biological role, processing of precursors of alpha-factors and killer toxin. The protein is Kexin (KEX2) of Saccharomyces cerevisiae (strain ATCC 204508 / S288c) (Baker's yeast).